We begin with the raw amino-acid sequence, 130 residues long: Small ribosomal subunit protein uS11c (130 aa).

It belongs to the universal ribosomal protein uS11 family. As to quaternary structure, part of the 30S ribosomal subunit.

Its subcellular location is the plastid. The protein resides in the chloroplast. The chain is Small ribosomal subunit protein uS11c from Marchantia polymorpha (Common liverwort).